The following is a 72-amino-acid chain: Metallothionein-like protein type 2 A (72 aa).

It belongs to the metallothionein superfamily. Type 15 family. As to expression, leaves and roots.

Metallothioneins have a high content of cysteine residues that bind various heavy metals. This is Metallothionein-like protein type 2 A (MTA) from Solanum lycopersicum (Tomato).